The sequence spans 322 residues: Ferredoxin--NADP reductase (322 aa).

Asp-34, Gln-42, Tyr-47, Val-87, Phe-120, Asp-279, and Thr-320 together coordinate FAD.

The protein belongs to the ferredoxin--NADP reductase type 2 family. In terms of assembly, homodimer. The cofactor is FAD.

The enzyme catalyses 2 reduced [2Fe-2S]-[ferredoxin] + NADP(+) + H(+) = 2 oxidized [2Fe-2S]-[ferredoxin] + NADPH. In Streptococcus pneumoniae serotype 19F (strain G54), this protein is Ferredoxin--NADP reductase.